The primary structure comprises 207 residues: Uracil phosphoribosyltransferase (207 aa).

5-phospho-alpha-D-ribose 1-diphosphate is bound by residues Arg-77, Arg-102, and 129 to 137 (DPMLATGGS). Residues Ile-192 and 197-199 (GDA) contribute to the uracil site. Asp-198 contributes to the 5-phospho-alpha-D-ribose 1-diphosphate binding site.

The protein belongs to the UPRTase family. The cofactor is Mg(2+).

It carries out the reaction UMP + diphosphate = 5-phospho-alpha-D-ribose 1-diphosphate + uracil. The protein operates within pyrimidine metabolism; UMP biosynthesis via salvage pathway; UMP from uracil: step 1/1. With respect to regulation, allosterically activated by GTP. Functionally, catalyzes the conversion of uracil and 5-phospho-alpha-D-ribose 1-diphosphate (PRPP) to UMP and diphosphate. This chain is Uracil phosphoribosyltransferase, found in Mycoplasma capricolum subsp. capricolum (strain California kid / ATCC 27343 / NCTC 10154).